Reading from the N-terminus, the 206-residue chain is Guanylate kinase (206 aa).

The Guanylate kinase-like domain occupies 5 to 184 (GMLIVLSGPS…AAERIKAIIR (180 aa)). 12–19 (GPSGVGKG) contributes to the ATP binding site.

Belongs to the guanylate kinase family.

Its subcellular location is the cytoplasm. It carries out the reaction GMP + ATP = GDP + ADP. In terms of biological role, essential for recycling GMP and indirectly, cGMP. This is Guanylate kinase from Lactiplantibacillus plantarum (strain ATCC BAA-793 / NCIMB 8826 / WCFS1) (Lactobacillus plantarum).